The chain runs to 809 residues: Protein TRC8 homolog (809 aa).

11 helical membrane-spanning segments follow: residues 124–144 (TVKFVLCVFAFLSAACIFMLW), 147–167 (HLVMVYMFLTSLGLTFLSYWS), 200–220 (VMSLAPHLMAQWFMGMLFAYI), 233–253 (MPIIFASPILLAMLPLPAKVV), 256–276 (LPVVAVFTPIILTKITLMQSA), 350–370 (LVDGCETMTAVLGMTGVISMF), 392–412 (LGTVSAVLFYILALQTGLTSL), 425–445 (LCLLMTALLHFLHNIVSPILM), 461–481 (ALSVCAFLVVLSVSLLYHLWS), 488–508 (WLLAVTAFSVEVVVKVLVSLA), and 539–559 (SVEFCFGILLFINGAWILIFE). Residues 621–659 (CAICYQEMYSAKITRCRHFFHGVCLRKWLYVQDRCPLCH) form an RING-type; atypical zinc finger. 2 disordered regions span residues 696–724 (NNAAAQRRSPERAPVEASEQAPATSSSSA) and 752–788 (VASSSSATHRISASGSSDSSYMTASAQSPPPTATSAA). The span at 711-724 (EASEQAPATSSSSA) shows a compositional bias: low complexity.

As to quaternary structure, interacts with VHL. Interacts with the MPN domain of CSN5. Interacts with EIF3F and EIF3H.

Its subcellular location is the endoplasmic reticulum membrane. In terms of biological role, plays a role in growth inhibition that is dependent upon COP9 signalosome subunits CSN5 and CSN6. May modulate signalosome levels or compartmentalization. Probably functions in the same or a related pathway to VHL during early midline development. The chain is Protein TRC8 homolog from Drosophila melanogaster (Fruit fly).